A 233-amino-acid chain; its full sequence is Large ribosomal subunit protein uL1 (233 aa).

Belongs to the universal ribosomal protein uL1 family. In terms of assembly, part of the 50S ribosomal subunit.

Functionally, binds directly to 23S rRNA. The L1 stalk is quite mobile in the ribosome, and is involved in E site tRNA release. Protein L1 is also a translational repressor protein, it controls the translation of the L11 operon by binding to its mRNA. In Syntrophotalea carbinolica (strain DSM 2380 / NBRC 103641 / GraBd1) (Pelobacter carbinolicus), this protein is Large ribosomal subunit protein uL1.